We begin with the raw amino-acid sequence, 319 residues long: Thioredoxin reductase (319 aa).

FAD contacts are provided by residues 11-14 (SGPA), 40-41 (IA), Gln45, Asn54, Cys145, Asp288, and 295-297 (RQA). Cysteines 142 and 145 form a disulfide.

It belongs to the class-II pyridine nucleotide-disulfide oxidoreductase family. Homodimer. The cofactor is FAD.

The protein resides in the cytoplasm. The enzyme catalyses [thioredoxin]-dithiol + NADP(+) = [thioredoxin]-disulfide + NADPH + H(+). This Candida glabrata (strain ATCC 2001 / BCRC 20586 / JCM 3761 / NBRC 0622 / NRRL Y-65 / CBS 138) (Yeast) protein is Thioredoxin reductase (TRR1).